A 242-amino-acid polypeptide reads, in one-letter code: Octanoyltransferase (242 aa).

Residues 31–206 (SQTTDEIWFL…LFLKNFGYNQ (176 aa)) enclose the BPL/LPL catalytic domain. Residues 70–77 (RGGQVTYH), 137–139 (SIG), and 150–152 (GLA) each bind substrate. C168 (acyl-thioester intermediate) is an active-site residue.

This sequence belongs to the LipB family.

It localises to the cytoplasm. The enzyme catalyses octanoyl-[ACP] + L-lysyl-[protein] = N(6)-octanoyl-L-lysyl-[protein] + holo-[ACP] + H(+). Its pathway is protein modification; protein lipoylation via endogenous pathway; protein N(6)-(lipoyl)lysine from octanoyl-[acyl-carrier-protein]: step 1/2. Functionally, catalyzes the transfer of endogenously produced octanoic acid from octanoyl-acyl-carrier-protein onto the lipoyl domains of lipoate-dependent enzymes. Lipoyl-ACP can also act as a substrate although octanoyl-ACP is likely to be the physiological substrate. The polypeptide is Octanoyltransferase (Coxiella burnetii (strain RSA 493 / Nine Mile phase I)).